A 179-amino-acid polypeptide reads, in one-letter code: ADP-ribosylation factor-like protein 5B (179 aa).

Gly-2 carries the N-myristoyl glycine lipid modification. GTP contacts are provided by residues 23–30 (GLDNAGKT), 66–70 (DIGGQ), 125–128 (NKQD), and Ala-159.

Belongs to the small GTPase superfamily. Arf family.

In terms of biological role, binds and exchanges GTP and GDP. The polypeptide is ADP-ribosylation factor-like protein 5B (Arl5b) (Mus musculus (Mouse)).